Here is a 71-residue protein sequence, read N- to C-terminus: Cytochrome c oxidase subunit 8C, mitochondrial (71 aa).

The N-terminal 28 residues, 1–28, are a transit peptide targeting the mitochondrion; it reads MAHLPRVCPFIRRLRVALLCLRPGHRFA. At 29–39 the chain is on the mitochondrial matrix side; it reads HSEPQRQRPAS. A helical membrane pass occupies residues 40–63; it reads ALEMAVGIVVIFSAFLTPSAYVLS. The Mitochondrial intermembrane segment spans residues 64-71; the sequence is NLSQFRRE.

It belongs to the cytochrome c oxidase VIII family. In terms of assembly, component of the cytochrome c oxidase (complex IV, CIV), a multisubunit enzyme composed of 14 subunits. The complex is composed of a catalytic core of 3 subunits MT-CO1, MT-CO2 and MT-CO3, encoded in the mitochondrial DNA, and 11 supernumerary subunits COX4I, COX5A, COX5B, COX6A, COX6B, COX6C, COX7A, COX7B, COX7C, COX8 and NDUFA4, which are encoded in the nuclear genome. The complex exists as a monomer or a dimer and forms supercomplexes (SCs) in the inner mitochondrial membrane with NADH-ubiquinone oxidoreductase (complex I, CI) and ubiquinol-cytochrome c oxidoreductase (cytochrome b-c1 complex, complex III, CIII), resulting in different assemblies (supercomplex SCI(1)III(2)IV(1) and megacomplex MCI(2)III(2)IV(2)).

The protein localises to the mitochondrion inner membrane. It participates in energy metabolism; oxidative phosphorylation. Its function is as follows. Component of the cytochrome c oxidase, the last enzyme in the mitochondrial electron transport chain which drives oxidative phosphorylation. The respiratory chain contains 3 multisubunit complexes succinate dehydrogenase (complex II, CII), ubiquinol-cytochrome c oxidoreductase (cytochrome b-c1 complex, complex III, CIII) and cytochrome c oxidase (complex IV, CIV), that cooperate to transfer electrons derived from NADH and succinate to molecular oxygen, creating an electrochemical gradient over the inner membrane that drives transmembrane transport and the ATP synthase. Cytochrome c oxidase is the component of the respiratory chain that catalyzes the reduction of oxygen to water. Electrons originating from reduced cytochrome c in the intermembrane space (IMS) are transferred via the dinuclear copper A center (CU(A)) of subunit 2 and heme A of subunit 1 to the active site in subunit 1, a binuclear center (BNC) formed by heme A3 and copper B (CU(B)). The BNC reduces molecular oxygen to 2 water molecules using 4 electrons from cytochrome c in the IMS and 4 protons from the mitochondrial matrix. This is Cytochrome c oxidase subunit 8C, mitochondrial (COX8C) from Eulemur fulvus fulvus (Brown lemur).